The sequence spans 430 residues: Enolase (430 aa).

A (2R)-2-phosphoglycerate-binding site is contributed by Q167. Catalysis depends on E209, which acts as the Proton donor. Positions 246, 289, and 316 each coordinate Mg(2+). 4 residues coordinate (2R)-2-phosphoglycerate: K341, R370, S371, and K392. Residue K341 is the Proton acceptor of the active site.

The protein belongs to the enolase family. In terms of assembly, component of the RNA degradosome, a multiprotein complex involved in RNA processing and mRNA degradation. It depends on Mg(2+) as a cofactor.

Its subcellular location is the cytoplasm. The protein resides in the secreted. It localises to the cell surface. The enzyme catalyses (2R)-2-phosphoglycerate = phosphoenolpyruvate + H2O. It functions in the pathway carbohydrate degradation; glycolysis; pyruvate from D-glyceraldehyde 3-phosphate: step 4/5. Catalyzes the reversible conversion of 2-phosphoglycerate (2-PG) into phosphoenolpyruvate (PEP). It is essential for the degradation of carbohydrates via glycolysis. This chain is Enolase, found in Alteromonas mediterranea (strain DSM 17117 / CIP 110805 / LMG 28347 / Deep ecotype).